Consider the following 260-residue polypeptide: Carbonic anhydrase 3 (260 aa).

Ala-2 carries the post-translational modification N-acetylalanine. Residues 3–259 (KEWGYASHNG…INNRVVRASF (257 aa)) form the Alpha-carbonic anhydrase domain. 5 positions are modified to phosphoserine: Ser-29, Ser-43, Ser-48, Ser-50, and Ser-55. The segment at 64–67 (KTCR) is involved in proton transfer. Residue Thr-73 is modified to Phosphothreonine. Zn(2+)-binding residues include His-94, His-96, and His-119. Tyr-127 bears the Phosphotyrosine mark. A phosphothreonine mark is found at Thr-129 and Thr-176. 2 positions are modified to S-glutathionyl cysteine: Cys-182 and Cys-187. Position 198-199 (198-199 (TT)) interacts with substrate. The residue at position 216 (Thr-216) is a Phosphothreonine. The residue at position 219 (Ser-219) is a Phosphoserine.

This sequence belongs to the alpha-carbonic anhydrase family. Zn(2+) is required as a cofactor. S-thiolated both by thiol-disulfide exchange with glutathione disulfide and by oxyradical-initiated S-thiolation with reduced glutathione. In terms of processing, S-glutathionylated in hepatocytes under oxidative stress. In terms of tissue distribution, muscle specific.

Its subcellular location is the cytoplasm. The catalysed reaction is hydrogencarbonate + H(+) = CO2 + H2O. With respect to regulation, activated by proton donors such as imidazole and the dipeptide histidylhistidine. Inhibited by coumarins and sulfonamide derivatives such as acetazolamide. Functionally, reversible hydration of carbon dioxide. This is Carbonic anhydrase 3 from Homo sapiens (Human).